A 30-amino-acid chain; its full sequence is Rothein 3.1 (30 aa).

Leucine 30 bears the Leucine amide mark.

As to expression, expressed by the skin dorsal glands.

It localises to the secreted. In terms of biological role, lacks antimicrobial activity. Does not inhibit the formation of NO by neuronal nitric oxide. The polypeptide is Rothein 3.1 (Litoria rothii (Roth's tree frog)).